The chain runs to 301 residues: Acetylglutamate kinase (301 aa).

Residues 68–69 (GG), Arg90, and Asn195 contribute to the substrate site.

Belongs to the acetylglutamate kinase family. ArgB subfamily.

Its subcellular location is the cytoplasm. It carries out the reaction N-acetyl-L-glutamate + ATP = N-acetyl-L-glutamyl 5-phosphate + ADP. The protein operates within amino-acid biosynthesis; L-arginine biosynthesis; N(2)-acetyl-L-ornithine from L-glutamate: step 2/4. In terms of biological role, catalyzes the ATP-dependent phosphorylation of N-acetyl-L-glutamate. This is Acetylglutamate kinase from Pseudomonas paraeruginosa (strain DSM 24068 / PA7) (Pseudomonas aeruginosa (strain PA7)).